Consider the following 199-residue polypeptide: MNSNSLSRFTSIVRTTSIRGFHDRSSVPRVVDDREKSSAKYNDAGYTFRYHQQGVDPLPRIPDCKVPVARPAYKVRDQWSDEAARFGQNDYIDLLGDGSVHPAQLQYHTPTWLRGFPGQHKANELIKLIHYRNLYDAKLKQNSPKRWHELRKRIKYLMMQHNYNKQDEIGRERNLGLWEEEPDYTYKDKSRRSFKDEIH.

The N-terminal 15 residues, methionine 1–threonine 15, are a transit peptide targeting the mitochondrion.

Belongs to the mitochondrion-specific ribosomal protein mL51 family. In terms of assembly, component of the mitochondrial ribosome large subunit (39S) which comprises a 16S rRNA and about 50 distinct proteins.

The protein resides in the mitochondrion. In Caenorhabditis elegans, this protein is Large ribosomal subunit protein mL51 (mrpl-51).